A 134-amino-acid chain; its full sequence is Small ribosomal subunit protein uS11 (134 aa).

Belongs to the universal ribosomal protein uS11 family. In terms of assembly, part of the 30S ribosomal subunit. Interacts with proteins S7 and S18. Binds to IF-3.

Its function is as follows. Located on the platform of the 30S subunit, it bridges several disparate RNA helices of the 16S rRNA. Forms part of the Shine-Dalgarno cleft in the 70S ribosome. The protein is Small ribosomal subunit protein uS11 of Paraburkholderia xenovorans (strain LB400).